A 57-amino-acid polypeptide reads, in one-letter code: MNVFMPIRVFLYSYVIINSLLSSFFHQYRPLFIKNGAAFGVSNSEKICVTLIVNELI.

The chain crosses the membrane as a helical span at residues 4–26 (FMPIRVFLYSYVIINSLLSSFFH).

It is found in the membrane. This is an uncharacterized protein from Saccharomyces cerevisiae (strain ATCC 204508 / S288c) (Baker's yeast).